We begin with the raw amino-acid sequence, 432 residues long: Cytochrome c biogenesis protein CcsB (432 aa).

The next 3 membrane-spanning stretches (helical) occupy residues 18 to 38 (LRLAIVLLLLIALASAVGTGI), 76 to 96 (SGWFLALLAWLGLALILCSWR), and 166 to 186 (VGPLLVHTGLVLLMLGAAWGA).

It belongs to the Ccs1/CcsB family. May interact with CcsA.

Its subcellular location is the cellular thylakoid membrane. Functionally, required during biogenesis of c-type cytochromes (cytochrome c6 and cytochrome f) at the step of heme attachment. The sequence is that of Cytochrome c biogenesis protein CcsB from Synechococcus sp. (strain CC9605).